Consider the following 309-residue polypeptide: Aspartate carbamoyltransferase catalytic subunit (309 aa).

The carbamoyl phosphate site is built by arginine 55 and threonine 56. Residue lysine 85 coordinates L-aspartate. Residues arginine 106, histidine 135, and glutamine 138 each coordinate carbamoyl phosphate. L-aspartate contacts are provided by arginine 168 and arginine 230. 2 residues coordinate carbamoyl phosphate: leucine 268 and proline 269.

Belongs to the aspartate/ornithine carbamoyltransferase superfamily. ATCase family. Heterododecamer (2C3:3R2) of six catalytic PyrB chains organized as two trimers (C3), and six regulatory PyrI chains organized as three dimers (R2).

It carries out the reaction carbamoyl phosphate + L-aspartate = N-carbamoyl-L-aspartate + phosphate + H(+). It functions in the pathway pyrimidine metabolism; UMP biosynthesis via de novo pathway; (S)-dihydroorotate from bicarbonate: step 2/3. Catalyzes the condensation of carbamoyl phosphate and aspartate to form carbamoyl aspartate and inorganic phosphate, the committed step in the de novo pyrimidine nucleotide biosynthesis pathway. This Aliivibrio salmonicida (strain LFI1238) (Vibrio salmonicida (strain LFI1238)) protein is Aspartate carbamoyltransferase catalytic subunit.